A 368-amino-acid polypeptide reads, in one-letter code: MQPGSSRCEEETPSLLWGLDPVFLAFAKLYIRDILDMKESRQVPGVFLYNGHPIKQVDVLGTVVGVRERDAFYSYGVDDSTGVINCICWKKLNTESVSAAPSAARELSLTSQLKKLQETIERRTKIEIGDTIRVRGSIRTYREEREIHATAYYKVDDPVWNIQIARMLELPTIYRKIYDQPFRSSALEKEEALSNPGALDLPSLTSLLSEKAKEFLMENRVQSFYQQELEMVESLLCLANQPVIHSACSDQVNFKKDTTSKAIHSIFKNAIQLLREKGLVFQKDDGFDNLYYVTREDKDLHRKIHQIIQQDCQKPNHMEKGCHFLHILACARLSIRPGLSEAVLQQVLELLEDQSDIVSTMEHYYTAF.

The segment at 1–185 (MQPGSSRCEE…KIYDQPFRSS (185 aa)) is interaction with CTC1. Residues 57-155 (VDVLGTVVGV…EIHATAYYKV (99 aa)) constitute a DNA-binding region (OB). Winged helix-turn-helix (wHTH) regions lie at residues 191–295 (EALS…YVTR) and 296–368 (EDKD…YTAF).

The protein belongs to the STN1 family. Component of the CST complex, composed of TEN1/C17orf106, CTC1/C17orf68 and STN1; in the complex interacts directly with TEN1 and CTC1. Interacts with ACD/TPP1, POT1 and POLA1.

The protein resides in the nucleus. The protein localises to the chromosome. It localises to the telomere. Its function is as follows. Component of the CST complex proposed to act as a specialized replication factor promoting DNA replication under conditions of replication stress or natural replication barriers such as the telomere duplex. The CST complex binds single-stranded DNA with high affinity in a sequence-independent manner, while isolated subunits bind DNA with low affinity by themselves. Initially the CST complex has been proposed to protect telomeres from DNA degradation. However, the CST complex has been shown to be involved in several aspects of telomere replication. The CST complex inhibits telomerase and is involved in telomere length homeostasis; it is proposed to bind to newly telomerase-synthesized 3' overhangs and to terminate telomerase action implicating the association with the ACD:POT1 complex thus interfering with its telomerase stimulation activity. The CST complex is also proposed to be involved in fill-in synthesis of the telomeric C-strand probably implicating recruitment and activation of DNA polymerase alpha. The CST complex facilitates recovery from many forms of exogenous DNA damage; seems to be involved in the re-initiation of DNA replication at repaired forks and/or dormant origins. Required for efficicient replication of the duplex region of the telomere. Promotes efficient replication of lagging-strand telomeres. Promotes general replication start following replication-fork stalling implicating new origin firing. May be in involved in C-strand fill-in during late S/G2 phase independent of its role in telomere duplex replication. In Macaca fascicularis (Crab-eating macaque), this protein is CST complex subunit STN1.